The primary structure comprises 600 residues: MAFASPPASPPDEDGQARAPRYPGEDTTPTSRQEIWGWYAYGIAAEVFAVCGVGSFLPLTLEQLARERGFLQSSHLPCVGPDSPSAPKESSPAMFRRDDTNEQCVVGLMGLEINTASFAMYTFSLAVLVQALTLISFSALADYENNRKTLLVTFGFIGSATSMLFVFIAPPVFVLGALLVVVGVVCLGSSFVVLNSFLPVLVASDPSIQNSNKESAAELHRLDPEAEYVHARTSFDGDEPTHRPPTGLGLGGATGTSSPELQLSTKISSKGVGLGYCAAVFVQILSILLLFTLSKTSISKASGTLPLRFVLLLVGIWWFSFTMVSRRWLRNRPGPPLESTSTGASSHQPRWRIWLHLVAFAWKSLWKTVKIALKLREVIVFLVAWFLLSDAMATVSGTAILFARTELKMSTTMVALLSITATLSGMAGAFLWPIVSRYFGLKSNHTIMVCIALFELIPLYGMLAYIPLFKKWGVIGLQQPWEIYPLAIVHGVVSGGLSSYCRSFFGLLIPPGMEAAFYALYAATDKGSSFIGPAIVGVLIDATGQVRSGFFFIAVLIVLPIPLVWMVDAEKGRKEGLKISEDVVRGGEGEDEEVEGLLAR.

The tract at residues 1–30 is disordered; sequence MAFASPPASPPDEDGQARAPRYPGEDTTPT. Transmembrane regions (helical) follow at residues 41–61, 117–137, 149–168, and 186–206; these read YGIAAEVFAVCGVGSFLPLTL, SFAMYTFSLAVLVQALTLISF, TLLVTFGFIGSATSMLFVFI, and CLGSSFVVLNSFLPVLVASDP. Residues 234-257 form a disordered region; the sequence is SFDGDEPTHRPPTGLGLGGATGTS. 4 helical membrane-spanning segments follow: residues 271–291, 304–324, 378–398, and 414–434; these read GVGLGYCAAVFVQILSILLLF, TLPLRFVLLLVGIWWFSFTMV, VIVFLVAWFLLSDAMATVSGT, and VALLSITATLSGMAGAFLWPI. N-linked (GlcNAc...) asparagine glycosylation is present at Asn-444. 4 helical membrane-spanning segments follow: residues 449 to 469, 484 to 506, 526 to 546, and 549 to 569; these read VCIALFELIPLYGMLAYIPLF, YPLAIVHGVVSGGLSSYCRSFFG, KGSSFIGPAIVGVLIDATGQV, and GFFFIAVLIVLPIPLVWMVDA.

This sequence belongs to the ATG22 family.

The protein localises to the vacuole membrane. In terms of biological role, vacuolar effluxer which mediate the efflux of amino acids resulting from autophagic degradation. The release of autophagic amino acids allows the maintenance of protein synthesis and viability during nitrogen starvation. This Aspergillus niger (strain ATCC MYA-4892 / CBS 513.88 / FGSC A1513) protein is Autophagy-related protein 22-2 (atg22-2).